The chain runs to 468 residues: 6-phospho-beta-galactosidase (468 aa).

Residues Q19, H116, N159, E160, and N297 each contribute to the D-galactose 6-phosphate site. The Proton donor role is filled by E160. E375 functions as the Nucleophile in the catalytic mechanism. D-galactose 6-phosphate is bound by residues S428, W429, K435, and Y437.

The protein belongs to the glycosyl hydrolase 1 family.

The enzyme catalyses a 6-phospho-beta-D-galactoside + H2O = D-galactose 6-phosphate + an alcohol. The protein operates within carbohydrate metabolism; lactose degradation; D-galactose 6-phosphate and beta-D-glucose from lactose 6-phosphate: step 1/1. This Streptococcus pyogenes serotype M4 (strain MGAS10750) protein is 6-phospho-beta-galactosidase.